We begin with the raw amino-acid sequence, 353 residues long: Rhodopsin (353 aa).

Residues 1–36 are Extracellular-facing; the sequence is MNGTEGPYFYVPMVNTSGIVRSPYEYPQYYLVNPAA. 2 N-linked (GlcNAc...) asparagine glycosylation sites follow: Asn2 and Asn15. The chain crosses the membrane as a helical span at residues 37–61; sequence YAALGAYMFLLILVGFPINFLTLYV. At 62–73 the chain is on the cytoplasmic side; sequence TIEHKKLRTPLN. A helical transmembrane segment spans residues 74–96; it reads YILLNLAVADLFMVFGGFTTTMY. At 97 to 110 the chain is on the extracellular side; that stretch reads TSMHGYFVLGRLGC. The cysteines at positions 110 and 187 are disulfide-linked. Residues 111–133 traverse the membrane as a helical segment; sequence NIEGFFATLGGEIALWSLVVLAI. The 'Ionic lock' involved in activated form stabilization signature appears at 134–136; sequence ERW. The Cytoplasmic portion of the chain corresponds to 134–152; it reads ERWVVVCKPISNFRFGENH. Residues 153 to 173 traverse the membrane as a helical segment; that stretch reads AIMGLAFTWLMAMACAAPPLV. The Extracellular segment spans residues 174–202; sequence GWSRYIPEGMQCSCGIDYYTRAEGFNNES. Residue Asn200 is glycosylated (N-linked (GlcNAc...) asparagine). Residues 203–224 form a helical membrane-spanning segment; that stretch reads FVIYMFVCHFLIPLMVVFFCYG. The Cytoplasmic portion of the chain corresponds to 225 to 252; that stretch reads RLLCAVKEAAAAQQESETTQRAEREVTR. The chain crosses the membrane as a helical span at residues 253 to 274; that stretch reads MVVIMVIAFLICWCPYAGVAWW. The Extracellular segment spans residues 275–286; sequence IFTHQGSDFGPV. A helical transmembrane segment spans residues 287-308; that stretch reads FMTIPAFFAKSSSIYNPMIYIC. At Lys296 the chain carries N6-(retinylidene)lysine. The Cytoplasmic segment spans residues 309–353; sequence LNKQFRHCMITTLCCGKNPFEEEEGASTASKTEASSVSSSSVSPA. Residues Cys322 and Cys323 are each lipidated (S-palmitoyl cysteine). A disordered region spans residues 331–353; that stretch reads EEGASTASKTEASSVSSSSVSPA. Low complexity predominate over residues 334–353; sequence ASTASKTEASSVSSSSVSPA.

Belongs to the G-protein coupled receptor 1 family. Opsin subfamily. Phosphorylated on some or all of the serine and threonine residues present in the C-terminal region. In terms of processing, contains one covalently linked retinal chromophore.

The protein resides in the membrane. Its subcellular location is the cell projection. It localises to the cilium. It is found in the photoreceptor outer segment. Its function is as follows. Photoreceptor required for image-forming vision at low light intensity. While most salt water fish species use retinal as chromophore, most freshwater fish use 3-dehydroretinal, or a mixture of retinal and 3-dehydroretinal. Light-induced isomerization of 11-cis to all-trans retinal triggers a conformational change that activates signaling via G-proteins. Subsequent receptor phosphorylation mediates displacement of the bound G-protein alpha subunit by arrestin and terminates signaling. This is Rhodopsin (rho) from Lithognathus mormyrus (Striped seabream).